A 194-amino-acid chain; its full sequence is ATP-dependent Clp protease proteolytic subunit (194 aa).

The active-site Nucleophile is the S98. H123 is an active-site residue.

This sequence belongs to the peptidase S14 family. As to quaternary structure, fourteen ClpP subunits assemble into 2 heptameric rings which stack back to back to give a disk-like structure with a central cavity, resembling the structure of eukaryotic proteasomes.

Its subcellular location is the cytoplasm. The catalysed reaction is Hydrolysis of proteins to small peptides in the presence of ATP and magnesium. alpha-casein is the usual test substrate. In the absence of ATP, only oligopeptides shorter than five residues are hydrolyzed (such as succinyl-Leu-Tyr-|-NHMec, and Leu-Tyr-Leu-|-Tyr-Trp, in which cleavage of the -Tyr-|-Leu- and -Tyr-|-Trp bonds also occurs).. In terms of biological role, cleaves peptides in various proteins in a process that requires ATP hydrolysis. Has a chymotrypsin-like activity. Plays a major role in the degradation of misfolded proteins. The polypeptide is ATP-dependent Clp protease proteolytic subunit (Alkaliphilus metalliredigens (strain QYMF)).